The chain runs to 247 residues: tRNA1(Val) (adenine(37)-N6)-methyltransferase (247 aa).

This sequence belongs to the methyltransferase superfamily. tRNA (adenine-N(6)-)-methyltransferase family.

The protein localises to the cytoplasm. The catalysed reaction is adenosine(37) in tRNA1(Val) + S-adenosyl-L-methionine = N(6)-methyladenosine(37) in tRNA1(Val) + S-adenosyl-L-homocysteine + H(+). Its function is as follows. Specifically methylates the adenine in position 37 of tRNA(1)(Val) (anticodon cmo5UAC). The protein is tRNA1(Val) (adenine(37)-N6)-methyltransferase of Edwardsiella ictaluri (strain 93-146).